The primary structure comprises 496 residues: Guanosine-5'-triphosphate,3'-diphosphate pyrophosphatase (496 aa).

The protein belongs to the GppA/Ppx family. GppA subfamily.

It carries out the reaction guanosine 3'-diphosphate 5'-triphosphate + H2O = guanosine 3',5'-bis(diphosphate) + phosphate + H(+). It functions in the pathway purine metabolism; ppGpp biosynthesis; ppGpp from GTP: step 2/2. Functionally, catalyzes the conversion of pppGpp to ppGpp. Guanosine pentaphosphate (pppGpp) is a cytoplasmic signaling molecule which together with ppGpp controls the 'stringent response', an adaptive process that allows bacteria to respond to amino acid starvation, resulting in the coordinated regulation of numerous cellular activities. The protein is Guanosine-5'-triphosphate,3'-diphosphate pyrophosphatase of Aeromonas salmonicida (strain A449).